The chain runs to 210 residues: MFTSTGPFTAAHPVILASGSPRRRAFFEQMGIPFEVILPVDAEPSPIEGEQPEVYVRRAAEAKARAVAADHKGRLVVAADTVVALDDMILGKPASADDALSMLRRLAGRTHVVASGCCVVLPEGGRETFHSITRVTMWDCPEEALAAYVATGEPSDKAGAYGIQGIGAFLVRSIEGSWTNVVGLPVAELTALLLRRGAIHCQLPVEAVHA.

Catalysis depends on aspartate 80, which acts as the Proton acceptor.

The protein belongs to the Maf family. YhdE subfamily. Requires a divalent metal cation as cofactor.

The protein localises to the cytoplasm. The catalysed reaction is dTTP + H2O = dTMP + diphosphate + H(+). It catalyses the reaction UTP + H2O = UMP + diphosphate + H(+). In terms of biological role, nucleoside triphosphate pyrophosphatase that hydrolyzes dTTP and UTP. May have a dual role in cell division arrest and in preventing the incorporation of modified nucleotides into cellular nucleic acids. The polypeptide is dTTP/UTP pyrophosphatase (Nitratidesulfovibrio vulgaris (strain ATCC 29579 / DSM 644 / CCUG 34227 / NCIMB 8303 / VKM B-1760 / Hildenborough) (Desulfovibrio vulgaris)).